Reading from the N-terminus, the 508-residue chain is Photosystem II CP47 reaction center protein (508 aa).

The next 6 helical transmembrane spans lie at 21 to 36 (AVHL…WAGS), 101 to 115 (ITLS…IWHW), 140 to 156 (GIHL…FGAF), 203 to 218 (IAAG…FHLS), 237 to 252 (VLSS…AFVV), and 457 to 472 (TFAL…HGAR).

Belongs to the PsbB/PsbC family. PsbB subfamily. PSII is composed of 1 copy each of membrane proteins PsbA, PsbB, PsbC, PsbD, PsbE, PsbF, PsbH, PsbI, PsbJ, PsbK, PsbL, PsbM, PsbT, PsbX, PsbY, PsbZ, Psb30/Ycf12, at least 3 peripheral proteins of the oxygen-evolving complex and a large number of cofactors. It forms dimeric complexes. It depends on Binds multiple chlorophylls. PSII binds additional chlorophylls, carotenoids and specific lipids. as a cofactor.

The protein localises to the plastid. The protein resides in the chloroplast thylakoid membrane. Functionally, one of the components of the core complex of photosystem II (PSII). It binds chlorophyll and helps catalyze the primary light-induced photochemical processes of PSII. PSII is a light-driven water:plastoquinone oxidoreductase, using light energy to abstract electrons from H(2)O, generating O(2) and a proton gradient subsequently used for ATP formation. The polypeptide is Photosystem II CP47 reaction center protein (Psilotum nudum (Whisk fern)).